The chain runs to 259 residues: MKDVDNLKSIKEEWVCETGSDNQPLGNNQQSNCEYFVDSLFEEAQKVSSKCVSPAEQKKQVDVNIKLWKNGFTVNDDFRSYSDGASQQFLNSIKKGELPSELQGIFDKEEVDVKVEDKKNEICLSTKPVFQPFSGQGHRLGSATPKIVSKAKNIEVENKNNLSAVPLNNLEPITNIQIWLANGKRIVQKFNITHRVSHIKDFIEKYQGSQRSPPFSLATALPVLRLLDETLTLEEADLQNAVIIQRLQKTASFRELSEH.

Residues 1–151 form a required for interaction with CHRNA3 region; sequence MKDVDNLKSI…SATPKIVSKA (151 aa). The interval 1–164 is required for inhibition of CHRNA3 ubiquitination and translocation of CHRNA3 to the plasma membrane resulting in an increase in acetylcholine-gated nicotinic acetylcholine receptor currents; sequence MKDVDNLKSI…EVENKNNLSA (164 aa). Positions 60 to 124 constitute an SEP domain; that stretch reads QVDVNIKLWK…VEDKKNEICL (65 aa). The tract at residues 167 to 259 is required for interaction with VCP; the sequence is LNNLEPITNI…TASFRELSEH (93 aa). The UBX domain occupies 169–246; it reads NLEPITNIQI…DLQNAVIIQR (78 aa).

As to quaternary structure, part of a complex composed of STUB1/CHIP, VCP/p97, CHRNA3, and UBXN2A that modulates the ubiquitination and endoplasmic reticulum-associated degradation (ERAD) of CHRNA3. Within the complex UBXN2A acts as a scaffold protein required for the interaction of CHRNA3 with VCP/p97, this interaction also inhibits CHRNA3 ubiquitination by STUB1/CHIP and subsequently ERAD. Interacts (via SEP domain) with CHRNA3 and interacts (via UBX domain) with VCP/P97; these interactions are required for the interaction of CHRNA3 with the STUB1-VCP-UBXN2A complex. Interacts with HSPA9/MOT-2 (via SBD domain); the interaction inhibits HSPA9/MOT-2 interaction with and degradation of p53, thereby promotes p53 translocation to the nucleus. Interacts with RICTOR. Ubiquitinated. As to expression, expressed in the colon (at protein level).

Its subcellular location is the golgi apparatus. It is found in the endoplasmic reticulum. It localises to the perikaryon. The protein resides in the cell projection. The protein localises to the dendrite. Its subcellular location is the nucleus. It is found in the cytoplasm. Its function is as follows. Acts to repress the ubiquitination and subsequent endoplasmic reticulum-associated degradation of CHRNA3 by the STUB1-VCP-UBXN2A complex in cortical neurons. Also acts to promote the translocation of CHRNA3 to the plasma membrane and subsequently increases plasma membrane acetylcholine-gated ion-channel activation. Plays a role in the inhibition of STUB1-mediated TP53 degradation, via its interaction with HSPA9 which acts to inhibit TP53 binding to HSPA9. Positively mediates the ubiquitination and proteosomal degradation of RICTOR, may thereby act as a negative regulator of the mTORC2 pathway. The sequence is that of UBX domain-containing protein 2A from Homo sapiens (Human).